Here is a 505-residue protein sequence, read N- to C-terminus: NADH-quinone oxidoreductase subunit N (505 aa).

The next 14 membrane-spanning stretches (helical) occupy residues 20–40, 59–79, 83–103, 115–135, 137–157, 172–192, 220–240, 251–271, 285–305, 314–334, 342–362, 394–414, 431–451, and 481–501; these read ALAP…GDLF, ALAL…GGVF, GLAA…ALMS, GEYY…VSAG, AIVL…LVAL, FLMG…LYGL, AVVA…TVPF, APTT…FAVL, LWSD…NIAA, MLAY…AACT, AAYL…IIYL, LAAV…TAGF, ITVV…LGVA, and AVCL…LFWI.

The protein belongs to the complex I subunit 2 family. As to quaternary structure, NDH-1 is composed of 14 different subunits. Subunits NuoA, H, J, K, L, M, N constitute the membrane sector of the complex.

It is found in the cell inner membrane. It carries out the reaction a quinone + NADH + 5 H(+)(in) = a quinol + NAD(+) + 4 H(+)(out). Functionally, NDH-1 shuttles electrons from NADH, via FMN and iron-sulfur (Fe-S) centers, to quinones in the respiratory chain. The immediate electron acceptor for the enzyme in this species is believed to be ubiquinone. Couples the redox reaction to proton translocation (for every two electrons transferred, four hydrogen ions are translocated across the cytoplasmic membrane), and thus conserves the redox energy in a proton gradient. This is NADH-quinone oxidoreductase subunit N from Desulfovibrio desulfuricans (strain ATCC 27774 / DSM 6949 / MB).